The following is a 489-amino-acid chain: Coiled-coil domain-containing protein 77 (489 aa).

S38 bears the Phosphoserine mark. 2 coiled-coil regions span residues 57-120 and 212-487; these read SQEL…QVCL and ERHQ…NALR.

This Mus musculus (Mouse) protein is Coiled-coil domain-containing protein 77 (Ccdc77).